The primary structure comprises 430 residues: Enolase (430 aa).

Gln-167 is a (2R)-2-phosphoglycerate binding site. The active-site Proton donor is Glu-209. 3 residues coordinate Mg(2+): Asp-245, Glu-286, and Asp-313. The (2R)-2-phosphoglycerate site is built by Lys-338, Arg-367, Ser-368, and Lys-389. The Proton acceptor role is filled by Lys-338.

It belongs to the enolase family. It depends on Mg(2+) as a cofactor.

It is found in the cytoplasm. The protein localises to the secreted. It localises to the cell surface. The enzyme catalyses (2R)-2-phosphoglycerate = phosphoenolpyruvate + H2O. It participates in carbohydrate degradation; glycolysis; pyruvate from D-glyceraldehyde 3-phosphate: step 4/5. Its function is as follows. Catalyzes the reversible conversion of 2-phosphoglycerate (2-PG) into phosphoenolpyruvate (PEP). It is essential for the degradation of carbohydrates via glycolysis. This is Enolase from Parasynechococcus marenigrum (strain WH8102).